A 259-amino-acid polypeptide reads, in one-letter code: Deoxyribose-phosphate aldolase (259 aa).

D102 serves as the catalytic Proton donor/acceptor. K167 functions as the Schiff-base intermediate with acetaldehyde in the catalytic mechanism. K201 (proton donor/acceptor) is an active-site residue.

Belongs to the DeoC/FbaB aldolase family. DeoC type 2 subfamily.

The protein localises to the cytoplasm. It catalyses the reaction 2-deoxy-D-ribose 5-phosphate = D-glyceraldehyde 3-phosphate + acetaldehyde. Its pathway is carbohydrate degradation; 2-deoxy-D-ribose 1-phosphate degradation; D-glyceraldehyde 3-phosphate and acetaldehyde from 2-deoxy-alpha-D-ribose 1-phosphate: step 2/2. In terms of biological role, catalyzes a reversible aldol reaction between acetaldehyde and D-glyceraldehyde 3-phosphate to generate 2-deoxy-D-ribose 5-phosphate. The chain is Deoxyribose-phosphate aldolase from Escherichia coli (strain SMS-3-5 / SECEC).